A 567-amino-acid polypeptide reads, in one-letter code: Dihydroxy-acid dehydratase 3 (567 aa).

Cys57 contributes to the [2Fe-2S] cluster binding site. Position 89 (Asp89) interacts with Mg(2+). Residue Cys130 coordinates [2Fe-2S] cluster. Asp131 and Lys132 together coordinate Mg(2+). N6-carboxylysine is present on Lys132. Cys202 provides a ligand contact to [2Fe-2S] cluster. Residue Glu454 participates in Mg(2+) binding. Ser480 functions as the Proton acceptor in the catalytic mechanism.

Belongs to the IlvD/Edd family. As to quaternary structure, homodimer. The cofactor is [2Fe-2S] cluster. Mg(2+) is required as a cofactor.

The catalysed reaction is (2R)-2,3-dihydroxy-3-methylbutanoate = 3-methyl-2-oxobutanoate + H2O. The enzyme catalyses (2R,3R)-2,3-dihydroxy-3-methylpentanoate = (S)-3-methyl-2-oxopentanoate + H2O. The protein operates within amino-acid biosynthesis; L-isoleucine biosynthesis; L-isoleucine from 2-oxobutanoate: step 3/4. It functions in the pathway amino-acid biosynthesis; L-valine biosynthesis; L-valine from pyruvate: step 3/4. Functionally, functions in the biosynthesis of branched-chain amino acids. Catalyzes the dehydration of (2R,3R)-2,3-dihydroxy-3-methylpentanoate (2,3-dihydroxy-3-methylvalerate) into 2-oxo-3-methylpentanoate (2-oxo-3-methylvalerate) and of (2R)-2,3-dihydroxy-3-methylbutanoate (2,3-dihydroxyisovalerate) into 2-oxo-3-methylbutanoate (2-oxoisovalerate), the penultimate precursor to L-isoleucine and L-valine, respectively. In Aromatoleum aromaticum (strain DSM 19018 / LMG 30748 / EbN1) (Azoarcus sp. (strain EbN1)), this protein is Dihydroxy-acid dehydratase 3.